The following is a 729-amino-acid chain: Probable ATP-dependent RNA helicase DDX17 (729 aa).

Positions glutamate 20–glutamate 115 are disordered. Position 64 is a phosphoserine (serine 64). Residues glycine 86 to glycine 95 show a composition bias toward basic and acidic residues. Positions glycine 96–leucine 105 are enriched in gly residues. Lysine 108, lysine 109, and lysine 121 each carry N6-acetyllysine; by EP300. Residue lysine 129 forms a Glycyl lysine isopeptide (Lys-Gly) (interchain with G-Cter in SUMO); alternate linkage. Lysine 129 is covalently cross-linked (Glycyl lysine isopeptide (Lys-Gly) (interchain with G-Cter in SUMO1); alternate). Lysine 129 participates in a covalent cross-link: Glycyl lysine isopeptide (Lys-Gly) (interchain with G-Cter in SUMO2); alternate. Positions phenylalanine 171–cysteine 199 match the Q motif motif. Residues phenylalanine 202–isoleucine 377 enclose the Helicase ATP-binding domain. Residue alanine 215–threonine 222 participates in ATP binding. The short motif at aspartate 325 to aspartate 328 is the DEAD box element. In terms of domain architecture, Helicase C-terminal spans lysine 405–valine 552. The residue at position 523 (threonine 523) is a Phosphothreonine. Lysine 528 is covalently cross-linked (Glycyl lysine isopeptide (Lys-Gly) (interchain with G-Cter in SUMO2)). Residues lysine 547 to lysine 729 are transactivation domain. Disordered regions lie at residues leucine 551–asparagine 623 and threonine 659–lysine 729. Polar residues predominate over residues arginine 568 to leucine 578. The span at glutamate 583–arginine 610 shows a compositional bias: basic and acidic residues. A compositionally biased stretch (low complexity) spans threonine 659–glutamine 688. Position 684 is an omega-N-methylarginine (arginine 684). Residues proline 689–alanine 698 are compositionally biased toward polar residues. Residues tyrosine 717–lysine 729 show a composition bias toward pro residues. An interaction with YAP1 region spans residues proline 718 to proline 726.

The protein belongs to the DEAD box helicase family. DDX5/DBP2 subfamily. Interacts with DDX5 in an RNA-independent manner. Interacts with CDK9 transcription elongation complex under basal conditions. Following cell stimulation with poly(I:C), a synthetic double-stranded RNA mimicking viral infection, the interaction with CDK9 is decreased. Interacts with ESR1 in an estrogen-independent manner. Interacts with HNRNPH1; this interaction is important for the regulation of alternative splicing on G-quadruplex structures. At high, but not low, cell density, interacts with DROSHA and DGCR8, the core components of the microprocessor complex involved in the maturation of primary microRNAs (pri-miRNAs) into pre-miRNAs. The interaction with DGCR8 is reduced during mitosis. At low, but not high, cell density, interacts with YAP1 and with its paralog, WWTR1/TAZ. Interactions with DROSHA and YAP1 are mutually exclusive. In vitro, the pre-miRNA processing activity of the DDX17-containing microprocessor complex is weaker than that of the DROSHA/DGCR8 microprocessor complex devoid of DDX17. Interacts with UPF3B. Interacts with NFAT5; this interaction leads to DDX17 recruitment to LNC2 and S100A4 promoters and NFAT5-mediated DDX17-enhanced transactivation. Interacts with HDAC1, HDAC2 and HDAC3; this interaction with HDAC1 and HDAC3, but not HDAC2, depends upon DDX17 acetylation. Interacts with ZC3HAV1 (via N-terminal domain) in an RNA-independent manner. Interacts with EXOSC3/RRP40 and EXOSC5/RRP46; this interaction may be indirect and mediated by ZC3HAV1-binding. Interacts with EP300; this interaction leads to acetylation at lysine residues. Interacts with CREBBP/CBP and KAT2B/P/CAF. Directly interacts with CTNNB1. Interacts with MYOD1. Interacts with TP53. Interacts with DCP1A in an RNA-independent manner. Interacts with DCP2 in an RNA-dependent manner. Interacts with DHX36; this interaction occurs in a RNA-dependent manner. Interacts with ERCC6. Sumoylation significantly increases stability. It also promotes interaction specifically with HDAC1 (but not HDAC2, nor HDAC3) and strongly stimulates ESR1 and TP53 coactivation. In terms of processing, acetylation at lysine residues stabilizes the protein, stimulates interaction with HDAC1 and HDAC3, but not HDAC2, and represses ESR1 and TP53 coactivation activity. Widely expressed. Low expression, if any, in normal colonic epithelial cells (at protein level). Levels tend to increase during colon cancer progression, from very low in benign hyperplastic polyps to very high in tubular and villous adenomas.

The protein localises to the nucleus. It localises to the nucleolus. The protein resides in the cytoplasm. Its subcellular location is the cytosol. The enzyme catalyses ATP + H2O = ADP + phosphate + H(+). As an RNA helicase, unwinds RNA and alters RNA structures through ATP binding and hydrolysis. Involved in multiple cellular processes, including pre-mRNA splicing, alternative splicing, ribosomal RNA processing and miRNA processing, as well as transcription regulation. Regulates the alternative splicing of exons exhibiting specific features. For instance, promotes the inclusion of AC-rich alternative exons in CD44 transcripts. This function requires the RNA helicase activity. Affects NFAT5 and histone macro-H2A.1/MACROH2A1 alternative splicing in a CDK9-dependent manner. In NFAT5, promotes the introduction of alternative exon 4, which contains 2 stop codons and may target NFAT5 exon 4-containing transcripts to nonsense-mediated mRNA decay, leading to the down-regulation of NFAT5 protein. Affects splicing of mediators of steroid hormone signaling pathway, including kinases that phosphorylates ESR1, such as CDK2, MAPK1 and GSK3B, and transcriptional regulators, such as CREBBP, MED1, NCOR1 and NCOR2. By affecting GSK3B splicing, participates in ESR1 and AR stabilization. In myoblasts and epithelial cells, cooperates with HNRNPH1 to control the splicing of specific subsets of exons. In addition to binding mature mRNAs, also interacts with certain pri-microRNAs, including MIR663/miR-663a, MIR99B/miR-99b, and MIR6087/miR-6087. Binds pri-microRNAs on the 3' segment flanking the stem loop via the 5'-[ACG]CAUC[ACU]-3' consensus sequence. Required for the production of subsets of microRNAs, including MIR21 and MIR125B1. May be involved not only in microRNA primary transcript processing, but also stabilization. Participates in MYC down-regulation at high cell density through the production of MYC-targeting microRNAs. Along with DDX5, may be involved in the processing of the 32S intermediate into the mature 28S ribosomal RNA. Promoter-specific transcription regulator, functioning as a coactivator or corepressor depending on the context of the promoter and the transcriptional complex in which it exists. Enhances NFAT5 transcriptional activity. Synergizes with TP53 in the activation of the MDM2 promoter; this activity requires acetylation on lysine residues. May also coactivate MDM2 transcription through a TP53-independent pathway. Coactivates MMP7 transcription. Along with CTNNB1, coactivates MYC, JUN, FOSL1 and cyclin D1/CCND1 transcription. Alone or in combination with DDX5 and/or SRA1 non-coding RNA, plays a critical role in promoting the assembly of proteins required for the formation of the transcription initiation complex and chromatin remodeling leading to coactivation of MYOD1-dependent transcription. This helicase-independent activity is required for skeletal muscle cells to properly differentiate into myotubes. During epithelial-to-mesenchymal transition, coregulates SMAD-dependent transcriptional activity, directly controlling key effectors of differentiation, including miRNAs which in turn directly repress its expression. Plays a role in estrogen and testosterone signaling pathway at several levels. Mediates the use of alternative promoters in estrogen-responsive genes and regulates transcription and splicing of a large number of steroid hormone target genes. Contrary to splicing regulation activity, transcriptional coregulation of the estrogen receptor ESR1 is helicase-independent. Plays a role in innate immunity. Specifically restricts bunyavirus infection, including Rift Valley fever virus (RVFV) or La Crosse virus (LACV), but not vesicular stomatitis virus (VSV), in an interferon- and DROSHA-independent manner. Binds to RVFV RNA, likely via structured viral RNA elements. Promotes mRNA degradation mediated by the antiviral zinc-finger protein ZC3HAV1, in an ATPase-dependent manner. In Homo sapiens (Human), this protein is Probable ATP-dependent RNA helicase DDX17 (DDX17).